A 282-amino-acid chain; its full sequence is Bifunctional protein FolD 2 (282 aa).

Residues 164–166 and Ser-189 contribute to the NADP(+) site; that span reads GRS.

It belongs to the tetrahydrofolate dehydrogenase/cyclohydrolase family. Homodimer.

It carries out the reaction (6R)-5,10-methylene-5,6,7,8-tetrahydrofolate + NADP(+) = (6R)-5,10-methenyltetrahydrofolate + NADPH. It catalyses the reaction (6R)-5,10-methenyltetrahydrofolate + H2O = (6R)-10-formyltetrahydrofolate + H(+). The protein operates within one-carbon metabolism; tetrahydrofolate interconversion. Catalyzes the oxidation of 5,10-methylenetetrahydrofolate to 5,10-methenyltetrahydrofolate and then the hydrolysis of 5,10-methenyltetrahydrofolate to 10-formyltetrahydrofolate. The chain is Bifunctional protein FolD 2 from Lactobacillus johnsonii (strain CNCM I-12250 / La1 / NCC 533).